Here is a 446-residue protein sequence, read N- to C-terminus: Na(+)-translocating NADH-quinone reductase subunit A (446 aa).

Belongs to the NqrA family. As to quaternary structure, composed of six subunits; NqrA, NqrB, NqrC, NqrD, NqrE and NqrF.

It carries out the reaction a ubiquinone + n Na(+)(in) + NADH + H(+) = a ubiquinol + n Na(+)(out) + NAD(+). Its function is as follows. NQR complex catalyzes the reduction of ubiquinone-1 to ubiquinol by two successive reactions, coupled with the transport of Na(+) ions from the cytoplasm to the periplasm. NqrA to NqrE are probably involved in the second step, the conversion of ubisemiquinone to ubiquinol. In Aliivibrio salmonicida (strain LFI1238) (Vibrio salmonicida (strain LFI1238)), this protein is Na(+)-translocating NADH-quinone reductase subunit A.